A 597-amino-acid chain; its full sequence is Lipoprotein LpqB (597 aa).

Positions Met1 to Gly28 are cleaved as a signal peptide. Residue Cys29 is the site of N-palmitoyl cysteine attachment. The S-diacylglycerol cysteine moiety is linked to residue Cys29. The span at Gln39–Ser51 shows a compositional bias: polar residues. The tract at residues Gln39–Gly59 is disordered.

This sequence belongs to the LpqB lipoprotein family.

It localises to the cell membrane. This is Lipoprotein LpqB from Rhodococcus opacus (strain B4).